A 63-amino-acid polypeptide reads, in one-letter code: Large ribosomal subunit protein bL28 (63 aa).

It belongs to the bacterial ribosomal protein bL28 family.

This Geotalea uraniireducens (strain Rf4) (Geobacter uraniireducens) protein is Large ribosomal subunit protein bL28.